We begin with the raw amino-acid sequence, 60 residues long: Cytotoxin 8 (60 aa).

4 cysteine pairs are disulfide-bonded: Cys-3-Cys-21, Cys-14-Cys-38, Cys-42-Cys-53, and Cys-54-Cys-59.

The protein belongs to the three-finger toxin family. Short-chain subfamily. Type IA cytotoxin sub-subfamily. In terms of assembly, monomer in solution; Homodimer and oligomer in the presence of negatively charged lipids forming a pore with a size ranging between 20 and 30 Angstroms. In terms of tissue distribution, expressed by the venom gland.

Its subcellular location is the secreted. The protein localises to the target cell membrane. Functionally, shows cytolytic activity on many different cells by forming pore in lipid membranes. In vivo, increases heart rate or kills the animal by cardiac arrest. In addition, it binds to heparin with high affinity, interacts with Kv channel-interacting protein 1 (KCNIP1) in a calcium-independent manner, and binds to integrin alpha-V/beta-3 (ITGAV/ITGB3) with moderate affinity. Has hemolytic activity towards human erythrocytes (EC(50)=0.074 uM) and cytolytic activity towards various cell lines. The sequence is that of Cytotoxin 8 from Naja naja (Indian cobra).